A 306-amino-acid polypeptide reads, in one-letter code: Arginase (306 aa).

Positions 96, 123, 125, and 127 each coordinate Mn(2+). Residues 125–129 (HTDFH), 136–138 (SGN), and Asp178 each bind substrate. Residues Asp226 and Asp228 each contribute to the Mn(2+) site. Thr240 and Glu271 together coordinate substrate.

Belongs to the arginase family. Mn(2+) is required as a cofactor.

It catalyses the reaction L-arginine + H2O = urea + L-ornithine. Its pathway is nitrogen metabolism; urea cycle; L-ornithine and urea from L-arginine: step 1/1. The polypeptide is Arginase (arcB) (Brucella abortus biovar 1 (strain 9-941)).